The chain runs to 259 residues: Type III pantothenate kinase (259 aa).

6 to 13 serves as a coordination point for ATP; that stretch reads DVGNTNIV. Substrate is bound by residues Y100 and 107–110; that span reads GADR. The Proton acceptor role is filled by D109. D129 provides a ligand contact to K(+). Position 132 (T132) interacts with ATP. Substrate is bound at residue T184.

This sequence belongs to the type III pantothenate kinase family. Homodimer. NH4(+) serves as cofactor. K(+) is required as a cofactor.

The protein localises to the cytoplasm. It carries out the reaction (R)-pantothenate + ATP = (R)-4'-phosphopantothenate + ADP + H(+). The protein operates within cofactor biosynthesis; coenzyme A biosynthesis; CoA from (R)-pantothenate: step 1/5. Its function is as follows. Catalyzes the phosphorylation of pantothenate (Pan), the first step in CoA biosynthesis. The sequence is that of Type III pantothenate kinase from Clostridium kluyveri (strain NBRC 12016).